The following is a 354-amino-acid chain: Guanine nucleotide-binding protein G(o) subunit alpha (354 aa).

Residue glycine 2 is the site of N-myristoyl glycine attachment. Residue cysteine 3 is the site of S-palmitoyl cysteine attachment. The G-alpha domain occupies 32-354 (KDIKLLLLGA…ANNLRGCGLY (323 aa)). The G1 motif stretch occupies residues 35–48 (KLLLLGAGESGKST). Residues 40-47 (GAGESGKS), 176-182 (LRTRVKT), 201-205 (DVGGQ), 270-273 (NKKD), and alanine 326 contribute to the GTP site. Mg(2+) contacts are provided by serine 47 and threonine 182. Positions 174–182 (DILRTRVKT) are G2 motif. The interval 197-206 (FKLFDVGGQR) is G3 motif. The interval 266 to 273 (ILFLNKKD) is G4 motif. Positions 324–329 (TCATDT) are G5 motif.

This sequence belongs to the G-alpha family. G(i/o/t/z) subfamily. G proteins are composed of 3 units; alpha, beta and gamma. The alpha chain contains the guanine nucleotide binding site.

Its function is as follows. Guanine nucleotide-binding proteins (G proteins) are involved as modulators or transducers in various transmembrane signaling systems. The G(o) protein function is not clear. This chain is Guanine nucleotide-binding protein G(o) subunit alpha, found in Locusta migratoria (Migratory locust).